Consider the following 436-residue polypeptide: Enolase (436 aa).

Glutamine 167 is a binding site for (2R)-2-phosphoglycerate. Residue glutamate 209 is the Proton donor of the active site. Positions 246, 291, and 318 each coordinate Mg(2+). (2R)-2-phosphoglycerate-binding residues include lysine 343, arginine 372, serine 373, and lysine 394. Lysine 343 acts as the Proton acceptor in catalysis.

Belongs to the enolase family. In terms of assembly, component of the RNA degradosome, a multiprotein complex involved in RNA processing and mRNA degradation. Requires Mg(2+) as cofactor.

It localises to the cytoplasm. It is found in the secreted. The protein resides in the cell surface. It carries out the reaction (2R)-2-phosphoglycerate = phosphoenolpyruvate + H2O. It participates in carbohydrate degradation; glycolysis; pyruvate from D-glyceraldehyde 3-phosphate: step 4/5. In terms of biological role, catalyzes the reversible conversion of 2-phosphoglycerate (2-PG) into phosphoenolpyruvate (PEP). It is essential for the degradation of carbohydrates via glycolysis. In Haemophilus influenzae (strain PittGG), this protein is Enolase.